Here is a 593-residue protein sequence, read N- to C-terminus: UvrABC system protein C (593 aa).

Residues 14–91 (DSPGCYLHKD…IQENMPKYNI (78 aa)) form the GIY-YIG domain. The region spanning 196–231 (NKIVNGLTEKMKSAAMTMEFERAAEYRDLIEAISLL) is the UVR domain.

It belongs to the UvrC family. In terms of assembly, interacts with UvrB in an incision complex.

The protein localises to the cytoplasm. The UvrABC repair system catalyzes the recognition and processing of DNA lesions. UvrC both incises the 5' and 3' sides of the lesion. The N-terminal half is responsible for the 3' incision and the C-terminal half is responsible for the 5' incision. This chain is UvrABC system protein C, found in Streptococcus agalactiae serotype III (strain NEM316).